Reading from the N-terminus, the 411-residue chain is Dihydrofolate synthase/folylpolyglutamate synthase (411 aa).

53–56 (GKGT) contacts ATP. Serine 77 provides a ligand contact to Mg(2+). Residues 116–119 (TYFE) and 147–149 (LDA) contribute to the 7,8-dihydropteroate site. Residue histidine 167 coordinates Mg(2+). ATP is bound by residues arginine 283 and aspartate 296.

It belongs to the folylpolyglutamate synthase family. As to quaternary structure, monomer. It depends on Mg(2+) as a cofactor.

The catalysed reaction is 7,8-dihydropteroate + L-glutamate + ATP = 7,8-dihydrofolate + ADP + phosphate + H(+). It carries out the reaction (6S)-5,6,7,8-tetrahydrofolyl-(gamma-L-Glu)(n) + L-glutamate + ATP = (6S)-5,6,7,8-tetrahydrofolyl-(gamma-L-Glu)(n+1) + ADP + phosphate + H(+). The enzyme catalyses 10-formyltetrahydrofolyl-(gamma-L-Glu)(n) + L-glutamate + ATP = 10-formyltetrahydrofolyl-(gamma-L-Glu)(n+1) + ADP + phosphate + H(+). It catalyses the reaction (6R)-5,10-methylenetetrahydrofolyl-(gamma-L-Glu)(n) + L-glutamate + ATP = (6R)-5,10-methylenetetrahydrofolyl-(gamma-L-Glu)(n+1) + ADP + phosphate + H(+). It functions in the pathway cofactor biosynthesis; tetrahydrofolate biosynthesis; 7,8-dihydrofolate from 2-amino-4-hydroxy-6-hydroxymethyl-7,8-dihydropteridine diphosphate and 4-aminobenzoate: step 2/2. Its pathway is cofactor biosynthesis; tetrahydrofolylpolyglutamate biosynthesis. In terms of biological role, functions in two distinct reactions of the de novo folate biosynthetic pathway. Catalyzes the addition of a glutamate residue to dihydropteroate (7,8-dihydropteroate or H2Pte) to form dihydrofolate (7,8-dihydrofolate monoglutamate or H2Pte-Glu). Also catalyzes successive additions of L-glutamate to tetrahydrofolate or 10-formyltetrahydrofolate or 5,10-methylenetetrahydrofolate, leading to folylpolyglutamate derivatives. The sequence is that of Dihydrofolate synthase/folylpolyglutamate synthase (folC) from Buchnera aphidicola subsp. Acyrthosiphon pisum (strain APS) (Acyrthosiphon pisum symbiotic bacterium).